Reading from the N-terminus, the 425-residue chain is Dipeptidase tcpJ (425 aa).

Positions 46, 48, and 158 each coordinate Zn(2+). Positions 185, 259, and 318 each coordinate substrate.

This sequence belongs to the metallo-dependent hydrolases superfamily. Peptidase M19 family. Zn(2+) serves as cofactor.

It carries out the reaction an L-aminoacyl-L-amino acid + H2O = 2 an L-alpha-amino acid. In terms of biological role, dipeptidase; part of the gene cluster that mediates the biosynthesis of an unusual class of epipolythiodioxopiperazines (ETPs) lacking the reactive thiol group important for toxicity. Firstly, L-tyrosine is prenylated by tcpD, before undergoing condensation with L-glycine in a reaction catalyzed by the NRPS tcpP leading to the diketopiperazine (DKP) backbone. Afterwards the alpha-carbon of tyrosine is oxidized by the cytochrome P450 tcpC to form a hydroxyl group. However, in contrast other ETP biosynthesis pathways studied so far, tcpC is not able to bishydroxylate the DKP at both alpha-carbon positions, but hydroxylates the alpha-carbon of the tyrosine part and the nitrogen of the glycine part. The next steps involve an alpha,beta-elimination reaction catalyzed by tcpI, a methylation by the methyltransferase tcpN the action of the four enzyme cascade tcpG/K/J/I. Due to a dysfunctional cytochrome P450 monooxygenase tcpC, the pathway leads to the biosynthesis of probable non-toxic metabolites lacking the reactive thiol group. In Claviceps purpurea (strain 20.1) (Ergot fungus), this protein is Dipeptidase tcpJ.